A 1179-amino-acid polypeptide reads, in one-letter code: Stress response protein NST1 (1179 aa).

Disordered regions lie at residues 1 to 64, 147 to 189, 255 to 351, 537 to 619, 660 to 819, 928 to 947, and 957 to 997; these read MSET…LNDP, TVNT…SNSS, KRQQ…NHSH, AAWI…EEEK, EAEE…DISQ, SSQAFNANTQAPPVYQPQLS, and SLSQ…VWNP. Residues 10-22 are compositionally biased toward basic and acidic residues; it reads DVSKFKNGDDVHF. Over residues 24–38 the composition is skewed to polar residues; sequence YNSTTNDQTINSTNV. Basic residues predominate over residues 39-53; the sequence is QKKKKKKKSKNKHKG. Positions 149–178 are enriched in low complexity; that stretch reads NTSNNHQNNSNTQGGSTSTSGGALNGSSTN. Basic and acidic residues predominate over residues 262-278; sequence YKQERDAHHDHHNHEPG. Residues 282-299 show a composition bias toward low complexity; sequence SDTGSSGDYDGSTQQDQQ. Basic and acidic residues predominate over residues 300–347; sequence HQYEHEIEHAFQEDEHEDECGHKNDHSHSHSHSHTENHNHSHSYDPNH. Residues 564–616 show a composition bias toward acidic residues; the sequence is ELEEELNDEYDEVDEDDDEGEEEGEEEEEELDDEEFEEDEEEDASDTESEISE. Positions 648 to 810 form a coiled coil; the sequence is SQDRTRTLIE…KSAKKQDHKE (163 aa). Basic and acidic residues-rich tracts occupy residues 663 to 681 and 690 to 812; these read ENAKKEREMKKLRQKEKAK and AKEE…KETG. The span at 957-977 shows a compositional bias: low complexity; the sequence is SLSQNSLSSNANENLNTNPLN.

The protein belongs to the NST1 family.

The protein localises to the cytoplasm. In terms of biological role, may act as a negative regulator of salt tolerance. This is Stress response protein NST1 (NST1) from Debaryomyces hansenii (strain ATCC 36239 / CBS 767 / BCRC 21394 / JCM 1990 / NBRC 0083 / IGC 2968) (Yeast).